Consider the following 379-residue polypeptide: Homoserine O-succinyltransferase (379 aa).

Positions 51-360 (NAVLICHALS…DAPQGHDAFL (310 aa)) constitute an AB hydrolase-1 domain. Ser-157 acts as the Nucleophile in catalysis. Arg-227 provides a ligand contact to substrate. Active-site residues include Asp-323 and His-356. Asp-357 contributes to the substrate binding site.

It belongs to the AB hydrolase superfamily. MetX family. In terms of assembly, homodimer.

The protein resides in the cytoplasm. It carries out the reaction L-homoserine + succinyl-CoA = O-succinyl-L-homoserine + CoA. Its pathway is amino-acid biosynthesis; L-methionine biosynthesis via de novo pathway; O-succinyl-L-homoserine from L-homoserine: step 1/1. Its function is as follows. Transfers a succinyl group from succinyl-CoA to L-homoserine, forming succinyl-L-homoserine. This chain is Homoserine O-succinyltransferase, found in Pseudomonas fluorescens (strain ATCC BAA-477 / NRRL B-23932 / Pf-5).